The primary structure comprises 492 residues: Ribose import ATP-binding protein RbsA (492 aa).

2 ABC transporter domains span residues 3–239 (IEMK…VGRS) and 249–492 (AEIR…TGGQ). Residue 35 to 42 (GENGAGKS) coordinates ATP.

It belongs to the ABC transporter superfamily. Ribose importer (TC 3.A.1.2.1) family. The complex is composed of an ATP-binding protein (RbsA), two transmembrane proteins (RbsC) and a solute-binding protein (RbsB).

It is found in the cell membrane. The catalysed reaction is D-ribose(out) + ATP + H2O = D-ribose(in) + ADP + phosphate + H(+). In terms of biological role, part of the ABC transporter complex RbsABC involved in ribose import. Responsible for energy coupling to the transport system. The polypeptide is Ribose import ATP-binding protein RbsA (Lactococcus lactis subsp. lactis (strain IL1403) (Streptococcus lactis)).